Reading from the N-terminus, the 501-residue chain is Probable cytochrome P450 6t3 (501 aa).

Cys444 contributes to the heme binding site.

The protein belongs to the cytochrome P450 family. It depends on heme as a cofactor.

It localises to the endoplasmic reticulum membrane. The protein localises to the microsome membrane. Functionally, may be involved in the metabolism of insect hormones and in the breakdown of synthetic insecticides. The chain is Probable cytochrome P450 6t3 (Cyp6t3) from Drosophila melanogaster (Fruit fly).